Reading from the N-terminus, the 333-residue chain is Transaldolase NQM1 (333 aa).

The active-site Schiff-base intermediate with substrate is Lys-144.

It belongs to the transaldolase family. Type 1 subfamily. Homodimer.

The enzyme catalyses D-sedoheptulose 7-phosphate + D-glyceraldehyde 3-phosphate = D-erythrose 4-phosphate + beta-D-fructose 6-phosphate. It functions in the pathway carbohydrate degradation; pentose phosphate pathway; D-glyceraldehyde 3-phosphate and beta-D-fructose 6-phosphate from D-ribose 5-phosphate and D-xylulose 5-phosphate (non-oxidative stage): step 2/3. Transaldolase is important for the balance of metabolites in the pentose-phosphate pathway. The sequence is that of Transaldolase NQM1 (NQM1) from Saccharomyces cerevisiae (strain ATCC 204508 / S288c) (Baker's yeast).